The sequence spans 489 residues: Cobyric acid synthase (489 aa).

Residues 247-439 form the GATase cobBQ-type domain; it reads ALKVVVPVLP…IHGVFDEPAA (193 aa). Cys328 (nucleophile) is an active-site residue. Residue His431 is part of the active site.

The protein belongs to the CobB/CobQ family. CobQ subfamily.

It participates in cofactor biosynthesis; adenosylcobalamin biosynthesis. Functionally, catalyzes amidations at positions B, D, E, and G on adenosylcobyrinic A,C-diamide. NH(2) groups are provided by glutamine, and one molecule of ATP is hydrogenolyzed for each amidation. This chain is Cobyric acid synthase, found in Marinobacter nauticus (strain ATCC 700491 / DSM 11845 / VT8) (Marinobacter aquaeolei).